We begin with the raw amino-acid sequence, 672 residues long: DNA mismatch repair protein MutL (672 aa).

Residues 443 to 454 (SYTSDSNQYENS) are compositionally biased toward polar residues. Positions 443 to 469 (SYTSDSNQYENSCKSDVDKESKSKTTG) are disordered. The segment covering 455-465 (CKSDVDKESKS) has biased composition (basic and acidic residues).

It belongs to the DNA mismatch repair MutL/HexB family.

In terms of biological role, this protein is involved in the repair of mismatches in DNA. It is required for dam-dependent methyl-directed DNA mismatch repair. May act as a 'molecular matchmaker', a protein that promotes the formation of a stable complex between two or more DNA-binding proteins in an ATP-dependent manner without itself being part of a final effector complex. This Clostridium botulinum (strain Eklund 17B / Type B) protein is DNA mismatch repair protein MutL.